We begin with the raw amino-acid sequence, 36 residues long: VDKRRPIWVMLLSSYWQDGNSLGVDAIMTNYPEDVK.

The protein belongs to the arthropod phospholipase D family. Class II subfamily. Requires Mg(2+) as cofactor. Post-translationally, contains 2 disulfide bonds. As to expression, expressed by the venom gland.

It localises to the secreted. It catalyses the reaction an N-(acyl)-sphingosylphosphocholine = an N-(acyl)-sphingosyl-1,3-cyclic phosphate + choline. The catalysed reaction is an N-(acyl)-sphingosylphosphoethanolamine = an N-(acyl)-sphingosyl-1,3-cyclic phosphate + ethanolamine. The enzyme catalyses a 1-acyl-sn-glycero-3-phosphocholine = a 1-acyl-sn-glycero-2,3-cyclic phosphate + choline. It carries out the reaction a 1-acyl-sn-glycero-3-phosphoethanolamine = a 1-acyl-sn-glycero-2,3-cyclic phosphate + ethanolamine. Functionally, dermonecrotic toxins cleave the phosphodiester linkage between the phosphate and headgroup of certain phospholipids (sphingolipid and lysolipid substrates), forming an alcohol (often choline) and a cyclic phosphate. This toxin acts on sphingomyelin (SM). It may also act on ceramide phosphoethanolamine (CPE), lysophosphatidylcholine (LPC) and lysophosphatidylethanolamine (LPE), but not on lysophosphatidylserine (LPS), and lysophosphatidylglycerol (LPG). It acts by transphosphatidylation, releasing exclusively cyclic phosphate products as second products. Induces dermonecrosis, hemolysis, increased vascular permeability, edema, inflammatory response, and platelet aggregation. This chain is Dermonecrotic toxin LgSicTox-beta-LOXN2, found in Loxosceles gaucho (Spider).